The following is a 61-amino-acid chain: Temporin-ALj (61 aa).

Residues 1–22 (MFTLKKSLLLLFFLATINLSFC) form the signal peptide. A propeptide spanning residues 23 to 46 (EQERNAEEERRDEPDERNAEVEKR) is cleaved from the precursor. At L59 the chain carries Leucine amide.

Belongs to the frog skin active peptide (FSAP) family. Temporin subfamily. In terms of tissue distribution, expressed by the skin glands.

The protein localises to the secreted. Its function is as follows. Antimicrobial peptide with activity against Gram-positive and Gram-negative bacteria and against fungi. Has been tested against S.aureus (MIC=7.5 ug/mL), B.pumilus (MIC=15.0 ug/mL), B.cereus (MIC=75.0 ug/mL), E.coli (MIC=15.0 ug/mL), B.dysenteriae (MIC=30.0 ug/mL), A.cacoaceticus (MIC=60.0 ug/mL), P.aeruginosa (MIC=7.5 ug/mL) and C.albicans (MIC=5.0 ug/mL). Also shows a weak hemolytic activity. The chain is Temporin-ALj from Amolops loloensis (Lolokou Sucker Frog).